A 757-amino-acid polypeptide reads, in one-letter code: Endonuclease MutS2 (757 aa).

321 to 328 (GPNMGGKT) provides a ligand contact to ATP. The Smr domain maps to 681-756 (IDIRGMTVEE…GTGVTVVEVE (76 aa)).

Belongs to the DNA mismatch repair MutS family. MutS2 subfamily. Homodimer. Binds to stalled ribosomes, contacting rRNA.

Functionally, endonuclease that is involved in the suppression of homologous recombination and thus may have a key role in the control of bacterial genetic diversity. Acts as a ribosome collision sensor, splitting the ribosome into its 2 subunits. Detects stalled/collided 70S ribosomes which it binds and splits by an ATP-hydrolysis driven conformational change. Acts upstream of the ribosome quality control system (RQC), a ribosome-associated complex that mediates the extraction of incompletely synthesized nascent chains from stalled ribosomes and their subsequent degradation. Probably generates substrates for RQC. The protein is Endonuclease MutS2 of Thermotoga neapolitana (strain ATCC 49049 / DSM 4359 / NBRC 107923 / NS-E).